The chain runs to 317 residues: Olfactory receptor 10AD1 (317 aa).

Residues 1–25 are Extracellular-facing; sequence MLRNGSIVTEFILVGFQQSSTSTRA. Asn-4 carries N-linked (GlcNAc...) asparagine glycosylation. A helical membrane pass occupies residues 26–46; it reads LLFALFLALYSLTMAMNGLII. The Cytoplasmic portion of the chain corresponds to 47–55; the sequence is FITSWTDPK. Residues 56 to 76 traverse the membrane as a helical segment; the sequence is LNSPMYFFLGHLSLLDVCFIT. Residues 77–100 are Extracellular-facing; that stretch reads TTIPQMLIHLVVRDHIVSFVCCMT. A disulfide bridge links Cys-98 with Cys-190. The helical transmembrane segment at 101 to 121 threads the bilayer; sequence QMYFVFCVGVAECILLAFMAY. Residues 122–140 are Cytoplasmic-facing; it reads DRYVAICYPLNYVPIISQK. A helical transmembrane segment spans residues 141-161; that stretch reads VCVRLVGTAWFFGLINGIFLE. Residues 162 to 198 are Extracellular-facing; it reads YISFREPFRRDNHIESFFCEAPIVIGLSCGDPQFSLW. A helical transmembrane segment spans residues 199–218; sequence AIFADAIVVILSPMVLTVTS. At 219–238 the chain is on the cytoplasmic side; that stretch reads YVHILATILSKASSSGRGKT. A helical membrane pass occupies residues 239–259; it reads FSTCASHLTVVIFLYTSAMFS. Residues 260–272 lie on the Extracellular side of the membrane; it reads YMNPHSTHGPDKD. The chain crosses the membrane as a helical span at residues 273 to 293; it reads KPFSLLYTIITPMCNPIIYSF. Topologically, residues 294 to 317 are cytoplasmic; that stretch reads RNKEIKEAMVRALGRTRLAQPQSV.

The protein belongs to the G-protein coupled receptor 1 family.

The protein resides in the cell membrane. Its function is as follows. Odorant receptor. This is Olfactory receptor 10AD1 (OR10AD1) from Homo sapiens (Human).